A 367-amino-acid chain; its full sequence is Anhydro-N-acetylmuramic acid kinase (367 aa).

11-18 (GTSLDGVD) serves as a coordination point for ATP.

The protein belongs to the anhydro-N-acetylmuramic acid kinase family.

The enzyme catalyses 1,6-anhydro-N-acetyl-beta-muramate + ATP + H2O = N-acetyl-D-muramate 6-phosphate + ADP + H(+). Its pathway is amino-sugar metabolism; 1,6-anhydro-N-acetylmuramate degradation. It functions in the pathway cell wall biogenesis; peptidoglycan recycling. In terms of biological role, catalyzes the specific phosphorylation of 1,6-anhydro-N-acetylmuramic acid (anhMurNAc) with the simultaneous cleavage of the 1,6-anhydro ring, generating MurNAc-6-P. Is required for the utilization of anhMurNAc either imported from the medium or derived from its own cell wall murein, and thus plays a role in cell wall recycling. The sequence is that of Anhydro-N-acetylmuramic acid kinase from Bradyrhizobium diazoefficiens (strain JCM 10833 / BCRC 13528 / IAM 13628 / NBRC 14792 / USDA 110).